A 1015-amino-acid chain; its full sequence is Fibronectin-binding protein A (1015 aa).

Positions 1-36 (MKNNLRYGIRKHKLGAASVFLGTMIVVGMGQDKEAA) are cleaved as a signal peptide. Positions 7–18 (YGIRKHKLGAAS) match the YSIRK-G/S signaling motif motif. Residues 37–512 (ASEQKTTTVE…SNKADGNGKN (476 aa)) are ligand-binding A region. The span at 75–92 (SYSATATEQPSNATQVTT) shows a compositional bias: polar residues. Residues 75 to 199 (SYSATATEQP…KVETGTDVTS (125 aa)) form a disordered region. Basic and acidic residues predominate over residues 112–126 (TVKEEVVKEEAKPQV). Residues 129–139 (TTQSQDNSGDQ) show a composition bias toward polar residues. Residues 179-193 (DVVEAKEASDEKVET) are compositionally biased toward basic and acidic residues. Residues 194–512 (GTDVTSKVTV…SNKADGNGKN (319 aa)) form a fibrinogen/elastin/tropoelastin-binding region. Residues 513-873 (GQIIQNNDFE…EGQQTIEEDT (361 aa)) form a fibronectin-binding region. The B-1 repeat unit spans residues 546–575 (ENQDNTPLDIDYHTAIDGEGGYVDGYIETI). Positions 546–605 (ENQDNTPLDIDYHTAIDGEGGYVDGYIETIEETDSSAIDIDYHTAVDSEAGHVGGYTESS) are 2 X approximate tandem repeats. One copy of the B-2 repeat lies at 576–605 (EETDSSAIDIDYHTAVDSEAGHVGGYTESS). 4 disordered regions span residues 596–623 (GHVG…NSKH), 741–815 (LGYE…IDFD), 828–953 (EIIE…GKVV), and 966–992 (VAPT…NKGM). The D-1 repeat unit spans residues 746–783 (GQNSGNQSFEEDTEEDKPKYEQGGNIVDIDFDSVPQIQ). Residues 746–875 (GQNSGNQSFE…QQTIEEDTTP (130 aa)) form a 4 X approximate tandem repeats region. Polar residues predominate over residues 780 to 791 (PQIQGQNNGNQS). The D-2 repeat unit spans residues 784–821 (GQNNGNQSFEEDTEKDKPKYEQGGNIIDIDFDSVPQIH). The D-3 repeat unit spans residues 822 to 860 (GFNKHTEIIEEDTNKDKPNYQFGGHNSVDFEEDTLPKVS). A compositionally biased stretch (basic and acidic residues) spans 828–839 (EIIEEDTNKDKP). One copy of the D-4; truncated repeat lies at 861–875 (GQNEGQQTIEEDTTP). Residues 875 to 935 (PPTPPTPEVP…PAEPGKPVPP (61 aa)) are compositionally biased toward pro residues. 5 WR repeats span residues 876 to 889 (PTPP…EPET), 890 to 903 (PTPP…EPET), 904 to 917 (PTPP…EPET), 918 to 931 (PTPP…EPGK), and 932 to 945 (PVPP…KPSK). A 5 X tandem repeats, Pro-rich (WR) region spans residues 876 to 945 (PTPPTPEVPS…AKEEPKKPSK (70 aa)). The short motif at 979–983 (LPETG) is the LPXTG sorting signal element. Thr-982 bears the Pentaglycyl murein peptidoglycan amidated threonine mark. Residues 983–1015 (GGEESTNKGMLFGGLFSILGLALLRRNKKNNKA) constitute a propeptide, removed by sortase.

Its subcellular location is the secreted. It is found in the cell wall. Its function is as follows. Promotes bacterial attachment to multiple substrates, such as fibronectin (Fn), fibrinogen (Fg), elastin peptides and tropoelastin. This confers to S.aureus the ability to invade endothelial cells. Promotes adherence to and aggregation of activated platelets. The sequence is that of Fibronectin-binding protein A (fnbA) from Staphylococcus aureus (strain MSSA476).